The chain runs to 120 residues: ATP-dependent Clp protease adapter protein ClpS (120 aa).

It belongs to the ClpS family. In terms of assembly, binds to the N-terminal domain of the chaperone ClpA.

In terms of biological role, involved in the modulation of the specificity of the ClpAP-mediated ATP-dependent protein degradation. The polypeptide is ATP-dependent Clp protease adapter protein ClpS (Azotobacter vinelandii (strain DJ / ATCC BAA-1303)).